Consider the following 309-residue polypeptide: Homoserine kinase (309 aa).

85–95 (PYGLGLGSSGS) serves as a coordination point for ATP.

The protein belongs to the GHMP kinase family. Homoserine kinase subfamily.

The protein resides in the cytoplasm. It carries out the reaction L-homoserine + ATP = O-phospho-L-homoserine + ADP + H(+). Its pathway is amino-acid biosynthesis; L-threonine biosynthesis; L-threonine from L-aspartate: step 4/5. Its function is as follows. Catalyzes the ATP-dependent phosphorylation of L-homoserine to L-homoserine phosphate. This Thermoplasma volcanium (strain ATCC 51530 / DSM 4299 / JCM 9571 / NBRC 15438 / GSS1) protein is Homoserine kinase.